The chain runs to 577 residues: Beta-fructofuranosidase, insoluble isoenzyme 1 (577 aa).

Residues 1-22 (MGTRLLALAPWLLLLLLQLAGA) form the signal peptide. The active site involves aspartate 63. N-linked (GlcNAc...) asparagine glycans are attached at residues asparagine 158, asparagine 183, and asparagine 333.

This sequence belongs to the glycosyl hydrolase 32 family.

It is found in the secreted. It localises to the extracellular space. The protein localises to the apoplast. The protein resides in the cell wall. The enzyme catalyses Hydrolysis of terminal non-reducing beta-D-fructofuranoside residues in beta-D-fructofuranosides.. Its function is as follows. May play a role in sucrose partitioning during seed development and in stress response. This chain is Beta-fructofuranosidase, insoluble isoenzyme 1 (CIN1), found in Oryza sativa subsp. indica (Rice).